The sequence spans 99 residues: Large ribosomal subunit protein uL23 (99 aa).

The protein belongs to the universal ribosomal protein uL23 family. Part of the 50S ribosomal subunit. Contacts protein L29, and trigger factor when it is bound to the ribosome.

One of the early assembly proteins it binds 23S rRNA. One of the proteins that surrounds the polypeptide exit tunnel on the outside of the ribosome. Forms the main docking site for trigger factor binding to the ribosome. This is Large ribosomal subunit protein uL23 from Xanthomonas axonopodis pv. citri (strain 306).